A 110-amino-acid polypeptide reads, in one-letter code: Nucleoid-associated protein Sfri_2406 (110 aa).

It belongs to the YbaB/EbfC family. Homodimer.

It localises to the cytoplasm. The protein resides in the nucleoid. In terms of biological role, binds to DNA and alters its conformation. May be involved in regulation of gene expression, nucleoid organization and DNA protection. This Shewanella frigidimarina (strain NCIMB 400) protein is Nucleoid-associated protein Sfri_2406.